The primary structure comprises 327 residues: Methionyl-tRNA formyltransferase (327 aa).

Ser-121 to Pro-124 is a binding site for (6S)-5,6,7,8-tetrahydrofolate.

Belongs to the Fmt family.

The catalysed reaction is L-methionyl-tRNA(fMet) + (6R)-10-formyltetrahydrofolate = N-formyl-L-methionyl-tRNA(fMet) + (6S)-5,6,7,8-tetrahydrofolate + H(+). Attaches a formyl group to the free amino group of methionyl-tRNA(fMet). The formyl group appears to play a dual role in the initiator identity of N-formylmethionyl-tRNA by promoting its recognition by IF2 and preventing the misappropriation of this tRNA by the elongation apparatus. The protein is Methionyl-tRNA formyltransferase of Burkholderia vietnamiensis (strain G4 / LMG 22486) (Burkholderia cepacia (strain R1808)).